A 588-amino-acid chain; its full sequence is Arginine--tRNA ligase (588 aa).

The short motif at 124–134 (PNVAKPMHVGH) is the 'HIGH' region element.

The protein belongs to the class-I aminoacyl-tRNA synthetase family. As to quaternary structure, monomer.

It is found in the cytoplasm. It catalyses the reaction tRNA(Arg) + L-arginine + ATP = L-arginyl-tRNA(Arg) + AMP + diphosphate. This Maricaulis maris (strain MCS10) (Caulobacter maris) protein is Arginine--tRNA ligase.